Reading from the N-terminus, the 352-residue chain is C-C chemokine receptor type 5 (352 aa).

Residues 1 to 30 (MDYQVSSPIYDIDYGPSEPCRKIDVKQMGA) lie on the Extracellular side of the membrane. Sulfotyrosine is present on Tyr3. O-linked (GalNAc...) serine glycans are attached at residues Ser6 and Ser7. 2 positions are modified to sulfotyrosine: Tyr10 and Tyr14. 2 disulfides stabilise this stretch: Cys20–Cys269 and Cys101–Cys178. A helical membrane pass occupies residues 31 to 58 (QLLPPLYSLVFLFGFVGNMLVVLILINC). At 59–68 (KRLKSMTDIY) the chain is on the cytoplasmic side. Residues 69-89 (LLNLAISDLLFLFTIPFWAHY) traverse the membrane as a helical segment. The Extracellular portion of the chain corresponds to 90–102 (AAGQWDFGNTMCQ). Residues 103 to 124 (FLTALYFIGFFSGIFFIILLTI) traverse the membrane as a helical segment. The Cytoplasmic portion of the chain corresponds to 125–141 (DRYLAIVHAVFALKART). A helical membrane pass occupies residues 142–166 (VTFGVVTSVITWVVAVFASLPGIIF). Residues 167–198 (TRSQKEGYHYSCSPHFPFSQYRFWKNFETLKM) are Extracellular-facing. Residues 199-218 (VILGLVLPLLVMVICYSGIL) form a helical membrane-spanning segment. Over 219-235 (KTLLRCRNEKKRHRAVR) the chain is Cytoplasmic. Residues 236–260 (LIFTIMIVYFLFWAPYNIVLLINTY) form a helical membrane-spanning segment. Residues 261–277 (PDFFGVNNCNSSNRLDQ) lie on the Extracellular side of the membrane. A helical membrane pass occupies residues 278-301 (AMQVTETLGMTHCCVNPIIYAFVG). Over 302-352 (EKFRNYLVIFFQKHIAKRFCKCCSIFQKEAPERANSVYTRSTGEQEISVGL) the chain is Cytoplasmic. Residues Cys321, Cys323, and Cys324 are each lipidated (S-palmitoyl cysteine). 3 positions are modified to phosphoserine; by BARK1: Ser337, Ser342, and Ser349.

It belongs to the G-protein coupled receptor 1 family. Interacts with PRAF2. Efficient ligand binding to CCL3/MIP-1alpha and CCL4/MIP-1beta requires sulfation, O-glycosylation and sialic acid modifications. Glycosylation on Ser-6 is required for efficient binding of CCL4. Interacts with GRK2. Interacts with ARRB1 and ARRB2. Interacts with CNIH4. Interacts with S100A4; this interaction stimulates T-lymphocyte chemotaxis. Post-translationally, sulfated on at least 2 of the N-terminal tyrosines. Sulfation is required for efficient binding of the chemokines, CCL3 and CCL4. Palmitoylation in the C-terminal is important for cell surface expression. In terms of processing, phosphorylation on serine residues in the C-terminal is stimulated by binding CC chemokines especially by APO-RANTES. Post-translationally, O-glycosylated, but not N-glycosylated. Ser-6 appears to be the major site even if Ser-7 may be also O-glycosylated. Also sialylated glycans present which contribute to chemokine binding. Ser-17 may also be glycosylated and, if so, with small moieties such as a T-antigen.

It is found in the cell membrane. Functionally, receptor for a number of inflammatory CC-chemokines including CCL3/MIP-1-alpha, CCL4/MIP-1-beta and RANTES and subsequently transduces a signal by increasing the intracellular calcium ion level. May play a role in the control of granulocytic lineage proliferation or differentiation. Participates in T-lymphocyte migration to the infection site by acting as a chemotactic receptor. This is C-C chemokine receptor type 5 (CCR5) from Saimiri sciureus (Common squirrel monkey).